A 250-amino-acid chain; its full sequence is N-acetylmuramoyl-L-alanine amidase CwlH (250 aa).

The first 44 residues, 1-44 (MVTIKKDFIPVSNDNRPGYAMAPAYITVHNTANTAKGADAKMHA), serve as a signal peptide directing secretion. Residues 45-141 (KFVKNPNTSE…KKWSGKECPR (97 aa)) enclose the N-acetylmuramoyl-L-alanine amidase domain.

It belongs to the N-acetylmuramoyl-L-alanine amidase 2 family.

It is found in the secreted. It carries out the reaction Hydrolyzes the link between N-acetylmuramoyl residues and L-amino acid residues in certain cell-wall glycopeptides.. In terms of biological role, autolysins are involved in some important biological processes such as cell separation, cell-wall turnover, competence for genetic transformation, formation of the flagella and sporulation. Could play a role in mother cell lysis with CwlC. The polypeptide is N-acetylmuramoyl-L-alanine amidase CwlH (cwlH) (Bacillus subtilis (strain 168)).